Reading from the N-terminus, the 566-residue chain is Mucolipin-2 (566 aa).

The Cytoplasmic portion of the chain corresponds to 1–65 (MARQPYRFPQ…YRARRQIPWK (65 aa)). Residues 66–86 (LGLQILKIVMVTTQLVRFGLS) form a helical membrane-spanning segment. At 87-288 (NQLVVAFKED…IFGSTQKNAQ (202 aa)) the chain is on the extracellular side. The segment at 107–123 (KGYSGTDEDDYSCSVYT) is extracellular/lumenal pore loop. Cystine bridges form between Cys164–Cys190 and Cys243–Cys274. The helical transmembrane segment at 289 to 309 (YVLVFDAFVIVICLASLILCT) threads the bilayer. The Cytoplasmic portion of the chain corresponds to 310 to 346 (RSIVLALRLRKRFLNFFLEKYKRPVCDTDQWEFINGW). The helical transmembrane segment at 347 to 367 (YVLVIISDLMTIIGSILKMEI) threads the bilayer. The Extracellular segment spans residues 368 to 376 (KAKNLTNYD). The chain crosses the membrane as a helical span at residues 377 to 397 (LCSIFLGTSTLLVWVGVIRYL). Residues 398–419 (GYFQAYNVLILTMQASLPKVLR) are Cytoplasmic-facing. Residues 420-440 (FCACAGMIYLGYTFCGWIVLG) form a helical membrane-spanning segment. The Extracellular segment spans residues 441-448 (PYHDKFEN). The pore-forming intramembrane region spans 449–469 (LNTVAECLFSLVNGDDMFATF). Positions 461-464 (NGDD) match the Selectivity filter motif. The Extracellular segment spans residues 470–480 (AQIQQKSILVW). Residues 481–502 (LFSRLYLYSFISLFIYMILSLF) form a helical membrane-spanning segment. Residues 503 to 566 (IALITDSYDT…RSDDHLIPIS (64 aa)) lie on the Cytoplasmic side of the membrane.

The protein belongs to the transient receptor (TC 1.A.4) family. Polycystin subfamily. MCOLN2 sub-subfamily. In terms of assembly, forms homooligomeric complexes; probably tetrameric. Can heterooligomerize with MCOLN1; heteromeric assemblies have different channel properties as compared to the respective homooligomers and may be tissue-specific. Interacts with TMEM176A.

Its subcellular location is the cell membrane. It localises to the late endosome membrane. The protein localises to the lysosome membrane. It is found in the recycling endosome membrane. The enzyme catalyses Ca(2+)(in) = Ca(2+)(out). It carries out the reaction Fe(2+)(in) = Fe(2+)(out). With respect to regulation, channel activity is reduced by low extracellular/lumenal pH level. Functionally, nonselective cation channel probably playing a role in the regulation of membrane trafficking events. Acts as a Ca(2+)-permeable cation channel with inwardly rectifying activity. May activate ARF6 and be involved in the trafficking of GPI-anchored cargo proteins to the cell surface via the ARF6-regulated recycling pathway. May play a role in immune processes. In adaptive immunity, TRPML2 and TRPML1 may play redundant roles in the function of the specialized lysosomes of B cells. In the innate immune response, may play a role in the regulation of chemokine secretion and macrophage migration. Through a possible and probably tissue-specific heteromerization with MCOLN1 may be at least in part involved in many lysosome-dependent cellular events. Also functions as a Fe(2+) permeable channel. The chain is Mucolipin-2 from Homo sapiens (Human).